The primary structure comprises 293 residues: Acetylglutamate kinase (293 aa).

Residues 70-71 (GG), arginine 92, and asparagine 186 each bind substrate.

The protein belongs to the acetylglutamate kinase family. ArgB subfamily.

The protein localises to the cytoplasm. The enzyme catalyses N-acetyl-L-glutamate + ATP = N-acetyl-L-glutamyl 5-phosphate + ADP. It functions in the pathway amino-acid biosynthesis; L-arginine biosynthesis; N(2)-acetyl-L-ornithine from L-glutamate: step 2/4. Catalyzes the ATP-dependent phosphorylation of N-acetyl-L-glutamate. The polypeptide is Acetylglutamate kinase (Parasynechococcus marenigrum (strain WH8102)).